A 237-amino-acid chain; its full sequence is Class B acid phosphatase (237 aa).

The N-terminal stretch at 1–23 (MKKITLALSAVCLLFTLNHSANA) is a signal peptide. The active-site Nucleophile is the aspartate 69. Mg(2+) is bound by residues aspartate 69 and aspartate 71. The active-site Proton donor is aspartate 71. Substrate is bound by residues 137-138 (TG) and lysine 177. Aspartate 192 contributes to the Mg(2+) binding site.

Belongs to the class B bacterial acid phosphatase family. Homotetramer. Mg(2+) is required as a cofactor.

It localises to the periplasm. The catalysed reaction is a phosphate monoester + H2O = an alcohol + phosphate. In terms of biological role, dephosphorylates several organic phosphate monoesters. Also has a phosphotransferase activity catalyzing the transfer of low-energy phosphate groups from organic phosphate monoesters to free hydroxyl groups of various organic compounds. The sequence is that of Class B acid phosphatase from Salmonella arizonae (strain ATCC BAA-731 / CDC346-86 / RSK2980).